We begin with the raw amino-acid sequence, 227 residues long: Pre-hexon-linking protein VIII (227 aa).

Phosphothreonine; by host is present on Thr-64. The propeptide occupies 112–157 (FRHRVRSPGQGITHLKIRGRGIQLNDESVSSSLGLRPDGTFQIGGA). Ser-118 and Ser-174 each carry phosphoserine; by host.

This sequence belongs to the adenoviridae hexon-linking protein family. In terms of assembly, interacts with the peripentonal hexons as well as the hexons in the facets. Part of a complex composed of the core-capsid bridging protein, the endosome lysis protein VI and the hexon-linking protein VIII; these interactions bridge the virus core to the capsid. Post-translationally, cleaved by the viral protease during virion maturation. May cause the middle segment to be shed from the capsid.

The protein localises to the virion. It localises to the host nucleus. Its function is as follows. Structural component of the virion that acts as a cement protein on the capsid interior and which glue the peripentonal hexons and group-of-nine hexons together. In Homo sapiens (Human), this protein is Pre-hexon-linking protein VIII.